Here is a 768-residue protein sequence, read N- to C-terminus: Protein STRUBBELIG (768 aa).

Positions 1 to 24 (MSFTRWEVFFGLSVLALTMPFSAG) are cleaved as a signal peptide. Residues 25–341 (VTNLRDVSAI…GSGKFWSTQR (317 aa)) lie on the Extracellular side of the membrane. Cys57 and Cys66 are disulfide-bonded. Asn70 carries N-linked (GlcNAc...) asparagine glycosylation. 6 LRR repeats span residues 94–115 (SIQVMDFSSNHISGTIPQALPS), 116–139 (SIRNLSLSSNRFTGNIPFTLSFLS), 140–162 (DLSELSLGSNLLSGEIPDYFQQL), 164–186 (KLTKLDLSSNILEGHLPSSMGDL), 188–210 (SLKILYLQDNKLTGTLDVIEDLF), and 211–231 (LTDLNVENNLFSGPIPPNLLK). N-linked (GlcNAc...) asparagine glycosylation occurs at Asn119. Residues 241-334 (PFNTSIITPP…ISPPSGSGSG (94 aa)) form a disordered region. N-linked (GlcNAc...) asparagine glycosylation occurs at Asn243. Composition is skewed to pro residues over residues 248–283 (TPPPPPVVDPPPATHRAPPVPRIPPVSGVPPAPFAP) and 291–301 (QHPPPSPPLVW). Residues 315–334 (NSVSGQPTLQISPPSGSGSG) are compositionally biased toward polar residues. A helical transmembrane segment spans residues 342 to 362 (IILVVSSVAIIVLVSGLCVTL). At 363 to 768 (WRCCRSKIYN…EIVQDLQHMI (406 aa)) the chain is on the cytoplasmic side. The interval 385-477 (PYFNKPPSQP…RAAHFPPGLN (93 aa)) is disordered. Polar residues predominate over residues 439 to 464 (SYYNKDVNTPQKPLQQPPRQFQSNDT). The Protein kinase domain maps to 497–768 (FSEENIIGEG…EIVQDLQHMI (272 aa)). ATP-binding positions include 503–511 (IGEGSIGNV) and Lys525.

Belongs to the protein kinase superfamily. Ser/Thr protein kinase family. Interacts (via intra-cellular domain) with AN; this interaction is not required for correct subcellular localization and recycling of SUB. Binds to QKY and POQ at the plasma membrane. Binds to QKY at plasmodesmata (PD) in root epidermal cells to promote tissue morphogenesis. In terms of tissue distribution, expressed in leaves, stems, inflorescences, flower buds and developing root epidermis.

It localises to the cell membrane. The protein localises to the cell junction. Its subcellular location is the plasmodesma. Its activity is regulated as follows. Regulated at the post-transcriptional level. Its function is as follows. Regulates the expression of transcription factors that define the cell fates. Acts in a non-cell-autonomous fashion, functions in a radial inside-out signaling process, and mediates cell morphogenesis and cell fate across clonally distinct cell layers in floral primordia, developing ovules, and root meristems. Seems to be required for the regulation of cell shape and the orientation of the mitotic division plane. Involved in root hair specification, in the formation of the outer integument and the shape of organs such as carpels and petals and is necessary for the shape and height of the stem. Non-functional SUB proteins are retained in the endoplasmic reticulum and degraded by endoplasmic reticulum-associated degradation (ERAD). Collaboratively with QKY and POQ, regulates cell growth anisotropy during gynoecium development, thus linking together cell-cell communication and cellular growth. Together with QKY, links RLK-dependent signal transduction and intercellular communication mediated by plasmodesmata (PD) to regulate tissue morphogenesis. This Arabidopsis thaliana (Mouse-ear cress) protein is Protein STRUBBELIG.